The primary structure comprises 135 residues: NADPH-dependent 7-cyano-7-deazaguanine reductase (135 aa).

Residue C48 is the Thioimide intermediate of the active site. D55 serves as the catalytic Proton donor. Substrate contacts are provided by residues 70 to 72 (IEL) and 89 to 90 (HE).

This sequence belongs to the GTP cyclohydrolase I family. QueF type 1 subfamily.

Its subcellular location is the cytoplasm. The enzyme catalyses 7-aminomethyl-7-carbaguanine + 2 NADP(+) = 7-cyano-7-deazaguanine + 2 NADPH + 3 H(+). It participates in tRNA modification; tRNA-queuosine biosynthesis. In terms of biological role, catalyzes the NADPH-dependent reduction of 7-cyano-7-deazaguanine (preQ0) to 7-aminomethyl-7-deazaguanine (preQ1). The sequence is that of NADPH-dependent 7-cyano-7-deazaguanine reductase from Prochlorococcus marinus (strain MIT 9313).